A 496-amino-acid chain; its full sequence is Glutamyl-tRNA(Gln) amidotransferase subunit A (496 aa).

Active-site charge relay system residues include K75 and S150. The Acyl-ester intermediate role is filled by S174.

It belongs to the amidase family. GatA subfamily. In terms of assembly, heterotrimer of A, B and C subunits.

It catalyses the reaction L-glutamyl-tRNA(Gln) + L-glutamine + ATP + H2O = L-glutaminyl-tRNA(Gln) + L-glutamate + ADP + phosphate + H(+). Functionally, allows the formation of correctly charged Gln-tRNA(Gln) through the transamidation of misacylated Glu-tRNA(Gln) in organisms which lack glutaminyl-tRNA synthetase. The reaction takes place in the presence of glutamine and ATP through an activated gamma-phospho-Glu-tRNA(Gln). This chain is Glutamyl-tRNA(Gln) amidotransferase subunit A, found in Burkholderia pseudomallei (strain 668).